The chain runs to 190 residues: NADH dehydrogenase [ubiquinone] iron-sulfur protein 3 (190 aa).

Belongs to the complex I 30 kDa subunit family. In terms of assembly, complex I is composed of about 45 different subunits. This is a component of the iron-sulfur (IP) fragment of the enzyme.

Its subcellular location is the mitochondrion inner membrane. The catalysed reaction is a ubiquinone + NADH + 5 H(+)(in) = a ubiquinol + NAD(+) + 4 H(+)(out). In terms of biological role, core subunit of the mitochondrial membrane respiratory chain NADH dehydrogenase (Complex I) that is believed to belong to the minimal assembly required for catalysis. Complex I functions in the transfer of electrons from NADH to the respiratory chain. The immediate electron acceptor for the enzyme is believed to be ubiquinone. The polypeptide is NADH dehydrogenase [ubiquinone] iron-sulfur protein 3 (NAD9) (Solanum tuberosum (Potato)).